The sequence spans 2199 residues: DNA polymerase epsilon catalytic subunit A (2199 aa).

Zn(2+) is bound by residues cysteine 2069, cysteine 2072, cysteine 2104, and cysteine 2107. The CysA-type zinc-finger motif lies at 2069–2107 (CKQCGVHQDFDLCLHEHLWPTRDDMGTLVFSDGWSCSSC). [4Fe-4S] cluster is bound by residues cysteine 2138, cysteine 2141, cysteine 2153, and cysteine 2155. A CysB motif motif is present at residues 2138–2155 (CSKCKTVKQWSLKERCSC).

The protein belongs to the DNA polymerase type-B family. As to quaternary structure, heterotetramer. Consists of 4 subunits: pol2, dpb2, dpb3 and dpb4. It depends on [4Fe-4S] cluster as a cofactor.

The protein resides in the nucleus. The catalysed reaction is DNA(n) + a 2'-deoxyribonucleoside 5'-triphosphate = DNA(n+1) + diphosphate. Functionally, DNA polymerase II participates in chromosomal DNA replication. This Schizosaccharomyces pombe (strain 972 / ATCC 24843) (Fission yeast) protein is DNA polymerase epsilon catalytic subunit A (pol2).